We begin with the raw amino-acid sequence, 112 residues long: Histone H2B (112 aa).

Residues 1–24 (MATPKSSSANRKKGGKKSHRKPKR) are disordered. The segment covering 10 to 24 (NRKKGGKKSHRKPKR) has biased composition (basic residues).

Belongs to the histone H2B family. The nucleosome is a histone octamer containing two molecules each of H2A, H2B, H3 and H4 assembled in one H3-H4 heterotetramer and two H2A-H2B heterodimers. The octamer wraps approximately 147 bp of DNA.

The protein resides in the nucleus. It localises to the chromosome. Core component of nucleosome. Nucleosomes wrap and compact DNA into chromatin, limiting DNA accessibility to the cellular machineries which require DNA as a template. Histones thereby play a central role in transcription regulation, DNA repair, DNA replication and chromosomal stability. DNA accessibility is regulated via a complex set of post-translational modifications of histones, also called histone code, and nucleosome remodeling. This Trypanosoma cruzi protein is Histone H2B.